The sequence spans 594 residues: UvrABC system protein C (594 aa).

The 87-residue stretch at 13-99 (HSSGVYQYFD…IKQLKPKYNI (87 aa)) folds into the GIY-YIG domain. Positions 205-240 (DKLIKELELKMERLSNNLRFEEALIYRDRIAKIQKI) constitute a UVR domain.

This sequence belongs to the UvrC family. In terms of assembly, interacts with UvrB in an incision complex.

It is found in the cytoplasm. The UvrABC repair system catalyzes the recognition and processing of DNA lesions. UvrC both incises the 5' and 3' sides of the lesion. The N-terminal half is responsible for the 3' incision and the C-terminal half is responsible for the 5' incision. The sequence is that of UvrABC system protein C from Helicobacter pylori (strain Shi470).